We begin with the raw amino-acid sequence, 597 residues long: MKHIRNFSIIAHIDHGKSTLSDRLIQVCGGLSDREMAAQVLDSMDLERERGITIKSQSVTLNYTAKDGETYQLNFIDTPGHVDFAYEVSRSLAACEGALLVVDAGQGVEAQTLANCYTAIEMDLEVVPILNKIDLPAADPERVAEEIEEIVGIDAMEATRCSAKTGIGVDDVLENIVSAIPAPEGDPDAPLQALIIDSWFDNYLGVVSLVRIKNGSLKKNDKIKVMSTGQTWGVDRLGIFTPKQVDTDVLRTGEVGWVVCGIKDILGAPVGDTLTLAKNGSEKPLPGFKKVKPQVYAGLFPVSSDDYENFRDALGKLSLNDASLFYEPENSAALGFGFRCGFLGMLHMEIIQERLEREYDLDLITTAPTVVYEVEQTNGETMYVDSPAKLPAVNDIEEIREPISRCNILVPADYLGNVITLCVEKRGVQVDMVYHGNQVAITYDIPMAEVVLDFFDRLKSTSRGYASLDYNFQRFEASNMVRVDVLLNGDKVDALALITHKDQSQTRGRQLVEKMKEFIPRQMFDIAIQAAIGNHIIARSTVKQLRKNVIAKCYGGDVSRKKKLLKKQKEGKKRMKQIGNVELPQEAFLAILHVGKD.

The tr-type G domain occupies 2–184; the sequence is KHIRNFSIIA…NIVSAIPAPE (183 aa). GTP contacts are provided by residues 14–19 and 131–134; these read DHGKST and NKID.

Belongs to the TRAFAC class translation factor GTPase superfamily. Classic translation factor GTPase family. LepA subfamily.

The protein resides in the cell inner membrane. The enzyme catalyses GTP + H2O = GDP + phosphate + H(+). Its function is as follows. Required for accurate and efficient protein synthesis under certain stress conditions. May act as a fidelity factor of the translation reaction, by catalyzing a one-codon backward translocation of tRNAs on improperly translocated ribosomes. Back-translocation proceeds from a post-translocation (POST) complex to a pre-translocation (PRE) complex, thus giving elongation factor G a second chance to translocate the tRNAs correctly. Binds to ribosomes in a GTP-dependent manner. The protein is Elongation factor 4 of Vibrio campbellii (strain ATCC BAA-1116).